Consider the following 234-residue polypeptide: Transcriptional activator protein TraR (234 aa).

Residues 167 to 232 (TAEDAAWLDP…HLTALAIRRK (66 aa)) enclose the HTH luxR-type domain. Positions 191-210 (MEEIADVEGVKYNSVRVKLR) form a DNA-binding region, H-T-H motif.

This sequence belongs to the autoinducer-regulated transcriptional regulatory protein family.

Positive regulation of conjugal transfer of Ti plasmids. TraR activates target genes in the presence of AAI and also activates traR and traI themselves. The protein is Transcriptional activator protein TraR (traR) of Rhizobium radiobacter (Agrobacterium tumefaciens).